A 286-amino-acid chain; its full sequence is tRNA (guanine-N(7)-)-methyltransferase (286 aa).

Residues Glu91, Glu116, Asn143, and Asp165 each contribute to the S-adenosyl-L-methionine site. Residue Asp165 is part of the active site. Substrate contacts are provided by residues Lys169, Asp201, and 262–265; that span reads TNFE.

It belongs to the class I-like SAM-binding methyltransferase superfamily. TrmB family.

It catalyses the reaction guanosine(46) in tRNA + S-adenosyl-L-methionine = N(7)-methylguanosine(46) in tRNA + S-adenosyl-L-homocysteine. It functions in the pathway tRNA modification; N(7)-methylguanine-tRNA biosynthesis. Its function is as follows. Catalyzes the formation of N(7)-methylguanine at position 46 (m7G46) in tRNA. The protein is tRNA (guanine-N(7)-)-methyltransferase of Bifidobacterium longum subsp. infantis (strain ATCC 15697 / DSM 20088 / JCM 1222 / NCTC 11817 / S12).